The sequence spans 664 residues: Cyclic nucleotide-gated channel alpha-2 (664 aa).

A compositionally biased stretch (polar residues) spans 1-10; sequence MMTEKSNGVK. A disordered region spans residues 1-61; sequence MMTEKSNGVK…LQRLAEMDTP (61 aa). Residues 1–146 lie on the Cytoplasmic side of the membrane; that stretch reads MMTEKSNGVK…PAGDWYYRWL (146 aa). The chain crosses the membrane as a helical span at residues 147 to 168; it reads FVIAMPVLYNWCLLVARACFSD. Topologically, residues 169–178 are extracellular; sequence LQRNYFVVWL. A helical membrane pass occupies residues 179–199; the sequence is VLDYFSDTVYIADLIIRLRTG. Over 200–224 the chain is Cytoplasmic; sequence FLEQGLLVKDPKKLRDNYIHTLQFK. The chain crosses the membrane as a helical span at residues 225–243; that stretch reads LDVASIIPTDLIYFAVGIH. The Extracellular segment spans residues 244 to 248; that stretch reads SPEVR. Residues 249-267 traverse the membrane as a helical segment; sequence FNRLLHFARMFEFFDRTET. Residues 268 to 274 are Cytoplasmic-facing; sequence RTSYPNI. Residues 272–380 form an ion conduction pathway region; it reads PNIFRISNLV…GNVGSMISNM (109 aa). The helical transmembrane segment at 275–298 threads the bilayer; sequence FRISNLVLYILVIIHWNACIYYAI. Over 299-321 the chain is Extracellular; sequence SKSIGFGVDTWVYPNITDPEYGY. The next 2 membrane-spanning stretches (helical) occupy residues 322–356 and 357–381; these read LAREYIYCLYWSTLTLTTIGETPPPVKDEEYLFVI and FDFLIGVLIFATIVGNVGSMISNMN. Residues 339–342 are selectivity filter; the sequence is TIGE. Residues 382–458 form a C-linker region; that stretch reads ATRAEFQAKI…STLKKVRIFQ (77 aa). Residues 382–664 are Cytoplasmic-facing; sequence ATRAEFQAKI…INTPEPAVAE (283 aa). A cyclic nucleotide-binding domain region spans residues 462-582; sequence AGLLVELVLK…EERGREILMK (121 aa). 3',5'-cyclic GMP is bound by residues Gly522, Ser525, Arg538, and Thr539. 3',5'-cyclic AMP-binding residues include Arg538 and Thr539. Positions 599-653 form a coiled coil; sequence VQEKLEQLETNMETLYTRFARLLAEYTGAQQKLKQRITVLETKMKQNHEDDYLSD.

The protein belongs to the cyclic nucleotide-gated cation channel (TC 1.A.1.5) family. CNGA2 subfamily. As to quaternary structure, the olfactory cyclic nucleotide-gated channel is an heterotetramer composed of CNGA2, CNGA4 and CNGB1b subunits with 2:1:1 stoichiometry.

Its subcellular location is the cell projection. The protein localises to the cilium membrane. It catalyses the reaction Ca(2+)(in) = Ca(2+)(out). The enzyme catalyses Na(+)(in) = Na(+)(out). It carries out the reaction K(+)(in) = K(+)(out). The catalysed reaction is NH4(+)(in) = NH4(+)(out). It catalyses the reaction Rb(+)(in) = Rb(+)(out). The enzyme catalyses Li(+)(in) = Li(+)(out). It carries out the reaction Cs(+)(in) = Cs(+)(out). In terms of biological role, pore-forming subunit of the olfactory cyclic nucleotide-gated channel. Operates in the cilia of olfactory sensory neurons where chemical stimulation of the odorant is converted to an electrical signal. Mediates odorant-induced cAMP-dependent Ca(2+) influx triggering neuron depolarization. The rise of intracellular Ca(2+) levels potentiates the olfactory response by activating Ca(2+)-dependent Cl(-) channels, but it also serves as a negative feedback signal to desensitize the channel for rapid adaptation to odorants. Conducts cAMP- and cGMP-gated ion currents, with permeability for monovalent and divalent cations. This Mus musculus (Mouse) protein is Cyclic nucleotide-gated channel alpha-2.